The sequence spans 148 residues: UPF0178 protein SH2212 (148 aa).

Belongs to the UPF0178 family.

This is UPF0178 protein SH2212 from Staphylococcus haemolyticus (strain JCSC1435).